A 425-amino-acid chain; its full sequence is GTPase Obg (425 aa).

The Obg domain occupies 1 to 158 (MFRDSAKIYV…YSLILEMKMI (158 aa)). An OBG-type G domain is found at 159 to 330 (ADVGLVGYPN…LLYAVSETLK (172 aa)). GTP-binding positions include 165–172 (GYPNVGKS), 190–194 (FTTLV), 212–215 (DIPG), 282–285 (NKMD), and 311–313 (SAA). Ser-172 and Thr-192 together coordinate Mg(2+). The region spanning 348–425 (YKVQEEKPFE…IYDTEFDYTR (78 aa)) is the OCT domain.

Belongs to the TRAFAC class OBG-HflX-like GTPase superfamily. OBG GTPase family. Monomer. Mg(2+) is required as a cofactor.

The protein resides in the cytoplasm. In terms of biological role, an essential GTPase which binds GTP, GDP and possibly (p)ppGpp with moderate affinity, with high nucleotide exchange rates and a fairly low GTP hydrolysis rate. Plays a role in control of the cell cycle, stress response, ribosome biogenesis and in those bacteria that undergo differentiation, in morphogenesis control. The chain is GTPase Obg from Ruminiclostridium cellulolyticum (strain ATCC 35319 / DSM 5812 / JCM 6584 / H10) (Clostridium cellulolyticum).